Consider the following 301-residue polypeptide: Heme A synthase (301 aa).

The Cytoplasmic segment spans residues 1–5 (MHKKL). Residues 6–26 (AFFSGFVTLGMMLVLIMGGTV) form a helical membrane-spanning segment. Residues 27-62 (TKTDSGDGCGTDWPLCHGKLIPTNPSVETMIEYSHR) are Extracellular-facing. Cysteines 35 and 42 form a disulfide. Residue Glu58 is part of the active site. Heme o is bound at residue His61. The helical transmembrane segment at 63 to 83 (VVSGIEGLLIIALAIWTFIAV) threads the bilayer. Residues 84 to 90 (KHRVDVK) are Cytoplasmic-facing. A helical membrane pass occupies residues 91 to 111 (IFAFLAFIFMLIQSIIGAGAV). The Extracellular segment spans residues 112–121 (IWQQSDAILA). The helical transmembrane segment at 122–142 (LHFGISLVSFASLLILTILLF) threads the bilayer. His123 is a binding site for heme o. At 143–158 (EGDREHQVVSRRLRSH) the chain is on the cytoplasmic side. Residues 159-179 (LYGLSIYTMIVVYTGAYVRHL) form a helical membrane-spanning segment. The Extracellular portion of the chain corresponds to 180 to 203 (GATYACVGWPICEQEVWTFESYVQ). Cys185 and Cys191 are joined by a disulfide. Residues 204 to 224 (MGHRVMAGLLVLYTLYVLYLA) traverse the membrane as a helical segment. A heme b-binding site is contributed by His206. Residues 225–234 (RKEMNRLIER) lie on the Cytoplasmic side of the membrane. Residues 235 to 255 (GMMASLFFILLQVGTGAWIVL) traverse the membrane as a helical segment. Topologically, residues 256-259 (GGHA) are extracellular. The chain crosses the membrane as a helical span at residues 260–280 (TYVPLLHAFLITCYFGILSYL). His266 is a binding site for heme b. Over 281 to 301 (SYHAYRSTARQDGAQLKNMNG) the chain is Cytoplasmic.

Belongs to the COX15/CtaA family. Type 1 subfamily. Interacts with CtaB. Requires heme b as cofactor.

Its subcellular location is the cell membrane. The catalysed reaction is Fe(II)-heme o + 2 A + H2O = Fe(II)-heme a + 2 AH2. The protein operates within porphyrin-containing compound metabolism; heme A biosynthesis; heme A from heme O: step 1/1. Catalyzes the conversion of heme O to heme A by two successive hydroxylations of the methyl group at C8. The first hydroxylation forms heme I, the second hydroxylation results in an unstable dihydroxymethyl group, which spontaneously dehydrates, resulting in the formyl group of heme A. The sequence is that of Heme A synthase from Exiguobacterium sp. (strain ATCC BAA-1283 / AT1b).